A 355-amino-acid polypeptide reads, in one-letter code: Alanine racemase (355 aa).

The active-site Proton acceptor; specific for D-alanine is the lysine 34. Lysine 34 carries the N6-(pyridoxal phosphate)lysine modification. Substrate is bound at residue arginine 133. The active-site Proton acceptor; specific for L-alanine is tyrosine 249. Methionine 297 contacts substrate.

It belongs to the alanine racemase family. Requires pyridoxal 5'-phosphate as cofactor.

The enzyme catalyses L-alanine = D-alanine. Its pathway is amino-acid biosynthesis; D-alanine biosynthesis; D-alanine from L-alanine: step 1/1. Catalyzes the interconversion of L-alanine and D-alanine. May also act on other amino acids. The polypeptide is Alanine racemase (alr) (Rickettsia africae (strain ESF-5)).